Consider the following 62-residue polypeptide: U10-buthitoxin-Hj1a (62 aa).

An N-terminal signal peptide occupies residues 1–22 (MQKIFIILVLFCILKFNVDVEG). 3 cysteine pairs are disulfide-bonded: Cys28–Cys46, Cys33–Cys59, and Cys37–Cys61.

This sequence belongs to the short scorpion toxin superfamily. Potassium channel inhibitor family. Alpha-KTx 23 subfamily. As to expression, expressed by the venom gland.

The protein resides in the secreted. Its function is as follows. May block potassium channels. The protein is U10-buthitoxin-Hj1a of Hottentotta judaicus (Black scorpion).